The chain runs to 324 residues: UDP-N-acetylenolpyruvoylglucosamine reductase (324 aa).

The FAD-binding PCMH-type domain maps to 36–217 (FRAGGLAELM…IRAEMDAVRA (182 aa)). Arg183 is an active-site residue. Ser232 serves as the catalytic Proton donor. The active site involves Glu302.

It belongs to the MurB family. It depends on FAD as a cofactor.

It is found in the cytoplasm. It catalyses the reaction UDP-N-acetyl-alpha-D-muramate + NADP(+) = UDP-N-acetyl-3-O-(1-carboxyvinyl)-alpha-D-glucosamine + NADPH + H(+). It participates in cell wall biogenesis; peptidoglycan biosynthesis. In terms of biological role, cell wall formation. This Rhizobium rhizogenes (strain K84 / ATCC BAA-868) (Agrobacterium radiobacter) protein is UDP-N-acetylenolpyruvoylglucosamine reductase.